We begin with the raw amino-acid sequence, 295 residues long: Perivine-Nbeta-methyltransferase (295 aa).

Positions 76–85 (ILDVGCGKGG) are SAM motif I. Positions 138–144 (DGSFELI) match the Vacuolar targeting signal motif. An SAM motif II region spans residues 139 to 147 (GSFELIFVI). The segment at 166–175 (VAAPGAQIVI) is SAM motif III.

Belongs to the class I-like SAM-binding methyltransferase superfamily. gTMT family. In terms of assembly, homodimer. In terms of tissue distribution, mainly expressed in young leaves, and, to a lower extent, in mature leaves, flowers, stems and roots (at protein level). Transcripts levels are highest in flowers, moderate in leaves and low in roots and stems.

It localises to the vacuole membrane. The enzyme catalyses perivine + S-adenosyl-L-methionine = vobasine + S-adenosyl-L-homocysteine + 2 H(+). Its pathway is alkaloid biosynthesis; vindoline biosynthesis. In terms of biological role, S-adenosyl-L-methionine-dependent N-methyltransferase involved in the biosynthesis of biologically active monoterpenoid indole alkaloids (MIAs) natural products including vindoline. Catalyzes the conversion of perivine to Nbeta-methylperivine (vobasine) by methylating its N4 nitrogen. Inactive with picrinine as substrate. This Catharanthus roseus (Madagascar periwinkle) protein is Perivine-Nbeta-methyltransferase.